We begin with the raw amino-acid sequence, 1203 residues long: DNA-directed RNA polymerase subunit beta (1203 aa).

Residues 1174–1195 (AAQEAKAAFEAEEAEKATKAEA) show a composition bias toward basic and acidic residues. Residues 1174-1203 (AAQEAKAAFEAEEAEKATKAEATEEAAEQE) are disordered.

Belongs to the RNA polymerase beta chain family. The RNAP catalytic core consists of 2 alpha, 1 beta, 1 beta' and 1 omega subunit. When a sigma factor is associated with the core the holoenzyme is formed, which can initiate transcription.

It catalyses the reaction RNA(n) + a ribonucleoside 5'-triphosphate = RNA(n+1) + diphosphate. Functionally, DNA-dependent RNA polymerase catalyzes the transcription of DNA into RNA using the four ribonucleoside triphosphates as substrates. In Streptococcus pneumoniae serotype 19F (strain G54), this protein is DNA-directed RNA polymerase subunit beta.